The primary structure comprises 215 residues: Vesicle-trafficking protein SEC22b (215 aa).

Topologically, residues 1 to 194 are cytoplasmic; sequence MVLLTMIARV…KYLNMRSTYA (194 aa). One can recognise a Longin domain in the interval 6–119; that stretch reads MIARVADGLP…YSFIEFDTFI (114 aa). An N6-acetyllysine modification is found at Lys-38. One can recognise a v-SNARE coiled-coil homology domain in the interval 134–194; sequence NLGSINTELQ…KYLNMRSTYA (61 aa). Residue Ser-137 is modified to Phosphoserine. Thr-140 is subject to Phosphothreonine. Residues Ser-164, Ser-168, Ser-174, and Ser-177 each carry the phosphoserine modification. Residues 195–215 traverse the membrane as a helical; Anchor for type IV membrane protein segment; it reads KLAAVAVFFIMLIVYVRFWWL.

It belongs to the synaptobrevin family. As to quaternary structure, interacts with STX17. Component of two distinct SNARE complexes consisting of STX5, GOSR2/BOS1, BET1 and SEC22B or STX18, USE1L, BNIP1/SEC20L and SEC22B. YKT6 can probably replace SEC22B as subunit of either complex. Interacts with the COPII Sec23/24 complex composed of SEC23A and SEC24A; recruits SEC22B into COPII-coated vesicles to allow its transport from the endoplasmic reticulum to the Golgi. Interacts with BET1.

Its subcellular location is the endoplasmic reticulum membrane. The protein resides in the endoplasmic reticulum-Golgi intermediate compartment membrane. The protein localises to the golgi apparatus. It localises to the cis-Golgi network membrane. It is found in the trans-Golgi network membrane. Its subcellular location is the melanosome. Its function is as follows. SNARE involved in targeting and fusion of ER-derived transport vesicles with the Golgi complex as well as Golgi-derived retrograde transport vesicles with the ER. In Cricetulus griseus (Chinese hamster), this protein is Vesicle-trafficking protein SEC22b (Sec22b).